Consider the following 1189-residue polypeptide: MSVACVLKRKAVLWQDSFSPHLKQHAQDTANPNMPVVLTSGTGSQAQPQPAANQALAAGTHSSPVPGSIGVAGRSQDDAMVDYFFQRQHGEQLGGGGSGGGGYNNSKHRWPTGDNIHAEHQVRSMDELNHDFQALALEGRAMGEQLLPGKKFWESDDSSKDGPKGIFLGDQWRDSAWGTSDHSVSQPIMVQRRPGQGFHVNSEVNSVLSPRSESGGLGVSMVEYVLSSSPGDSCLRKGGFGPRDAENDENDKGDKKNKGTFDGDKLGDLKEEGDVMDKTNGLPVQNGIDTDVKDFSRTPGNCQNSASEVDLLGPNQNGSEGLAQLASTNGAKPVEDFSNIESQSVPLDPMEHVGMEPLQFDYSGTQVPVDSAAATVGLFDYNSQQQLFQRPNALAVQQLTAAQQQQYALAAAHQPHIAGLAPAAFVPNPYIISAAPPGTDPYAAGLAAAATLGPAVVPHQYYGVTPWGVYPASLFQQQAAAAAAATNSANQQTTQQTQQGQQQVLRGGASQRPLTPNQNQQGQQTDPLVAAAAVNSALAFGQGLAAGMPGYPVLAPAAYYDQTGALVVNAGARNGLGAPVRLVAPAPVIISSSAAQAAVAAAAASANGAAGGLAGTTNGPFRPLGTQQPQPQPQQQPTNNLASSSFYGNNSLSSNSQSSSLFSQGSAQPANTSLGFGSSSSLGATLGSALGGFGTAVANSNTGSGSRRDSLTGSSDLYKRTSSSLTPIGHSFYNGLGFSSSPGPVGMPLPSQGPGHSQTPPPSLSSHGSSSSLNLGGLTNGSGRYISAAPGAEAKYRSASSASSLFSPSSTLFPSSRLRYGMSDVMPSGRSRLLEDFRNNRYPNLQLREIAGHIMEFSQDQHGSRFIQLKLERATPAERQLVFNEILQAAYQLMVDVFGNYVIQKFFEFGSLEQKLALAERIRGHVLSLALQMYGCRVIQKALEFIPPDQQVINEMVRELDGHVLKCVKDQNGNHVVQKCIECVQPQSLQFIIDAFKGQVFALSTHPYGCRVIQRILEHCLPEQTLPILEELHQHTEQLVQDQYGNYVIQHVLEHGRPEDKSKIVAEIRGNVLVLSQHKFASNVVEKCVTHASRTERAMLIDEVCTMNDGPHSALYTMMKDQYANYVVQKMIDVAEPAQRKIVMHKIRPHIATLRKYTYGKHILAKLEKYYMKNGVDLGPICGPPNGII.

5 disordered regions span residues 24–65 (QHAQ…SSPV), 233–288 (SCLR…QNGI), 491–525 (QQTTQQTQQGQQQVLRGGASQRPLTPNQNQQGQQT), 614–652 (AGTTNGPFRPLGTQQPQPQPQQQPTNNLASSSFYGNNSL), and 743–774 (GPVGMPLPSQGPGHSQTPPPSLSSHGSSSSLN). A compositionally biased stretch (low complexity) spans 45–58 (QAQPQPAANQALAA). Basic and acidic residues predominate over residues 250–277 (NDKGDKKNKGTFDGDKLGDLKEEGDVMD). Over residues 491-503 (QQTTQQTQQGQQQ) the composition is skewed to low complexity. Polar residues predominate over residues 512 to 525 (RPLTPNQNQQGQQT). 2 stretches are compositionally biased toward low complexity: residues 627-652 (QQPQPQPQQQPTNNLASSSFYGNNSL) and 764-774 (LSSHGSSSSLN). One can recognise a PUM-HD domain in the interval 829–1171 (GRSRLLEDFR…HILAKLEKYY (343 aa)). 8 Pumilio repeats span residues 849–884 (EIAGHIMEFSQDQHGSRFIQLKLERATPAERQLVFN), 885–920 (EILQAAYQLMVDVFGNYVIQKFFEFGSLEQKLALAE), 921–958 (RIRGHVLSLALQMYGCRVIQKALEFIPPDQQVINEMVR), 959–994 (ELDGHVLKCVKDQNGNHVVQKCIECVQPQSLQFIID), 995–1030 (AFKGQVFALSTHPYGCRVIQRILEHCLPEQTLPILE), 1031–1066 (ELHQHTEQLVQDQYGNYVIQHVLEHGRPEDKSKIVA), 1067–1102 (EIRGNVLVLSQHKFASNVVEKCVTHASRTERAMLID), and 1106–1145 (TMNDGPHSALYTMMKDQYANYVVQKMIDVAEPAQRKIVMH). Residues 864 to 868 (SRFIQ) are adenine-nucleotide binding in RNA target. Positions 900–904 (NYVIQ) are uracil-nucleotide binding in RNA target. The interval 936–940 (CRVIQ) is adenine-nucleotide binding in RNA target. The non-specific-nucleotide binding in RNA target stretch occupies residues 974–978 (NHVVQ). The interval 1010 to 1014 (CRVIQ) is adenine-nucleotide binding in RNA target. Positions 1046 to 1050 (NYVIQ) are uracil-nucleotide binding in RNA target. 2 guanine-nucleotide binding in RNA target regions span residues 1082–1086 (SNVVE) and 1083–1086 (NVVE). Residues 1125–1129 (NYVVQ) are uracil-nucleotide binding in RNA target.

As to expression, detected in embryonic male and female gonads, heart, liver and muscle. Detected in adult brain, testis, ovary, heart, lung, spleen, kidney and muscle.

It localises to the cytoplasm. The protein resides in the P-body. The protein localises to the cytoplasmic granule. In terms of biological role, sequence-specific RNA-binding protein that acts as a post-transcriptional repressor by binding the 3'-UTR of mRNA targets. Binds to an RNA consensus sequence, the Pumilio Response Element (PRE), 5'-UGUANAUA-3', that is related to the Nanos Response Element (NRE). Mediates post-transcriptional repression of transcripts via different mechanisms: acts via direct recruitment of the CCR4-POP2-NOT deadenylase leading to translational inhibition and mRNA degradation. Also mediates deadenylation-independent repression by promoting accessibility of miRNAs. This is Pumilio homolog 1 (PUM1) from Gallus gallus (Chicken).